A 464-amino-acid chain; its full sequence is Sensor histidine kinase Hik34 (464 aa).

Residues 235-449 enclose the Histidine kinase domain; that stretch reads ALTHEVRTPL…ILTIYLKCEQ (215 aa). Position 238 is a phosphohistidine; by autocatalysis (His-238).

In terms of processing, when expressed in E.coli autophosphorylates at 18 to 30 degrees Celsius; less phosphorylation occurs at 36 and none occurs at 42 or 48 degrees Celsius.

It carries out the reaction ATP + protein L-histidine = ADP + protein N-phospho-L-histidine.. Member of a two-component system Hik34/Rre1, controlling expression of at least 20 genes in response to hyperosmotic stress (0.5 M sorbitol) or salt (0.5 M NaCl). Represses expression of heat shock genes under normal growth conditions. Required for survival of long-term heat shock exposure. The polypeptide is Sensor histidine kinase Hik34 (Synechocystis sp. (strain ATCC 27184 / PCC 6803 / Kazusa)).